Reading from the N-terminus, the 579-residue chain is Protein alan shepard (579 aa).

Residues 1–12 (MHPRYSPAPPPQ) are compositionally biased toward pro residues. Residues 1–66 (MHPRYSPAPP…GSSSSAAAAP (66 aa)) are disordered. The residue at position 5 (Tyr-5) is a Phosphotyrosine. A compositionally biased stretch (low complexity) spans 13–24 (QQQQMGGPPHQQ). The segment covering 25 to 35 (QGGGGGGGGSM) has biased composition (gly residues). The span at 37-54 (GPSNAQQLPPQIPRSQNY) shows a compositional bias: polar residues. Residues 55 to 66 (SNGSSSSAAAAP) are compositionally biased toward low complexity. Phosphotyrosine is present on residues Tyr-125 and Tyr-142. Residues 164-225 (PATTTYGQRV…TVQNQNQQGG (62 aa)) form a disordered region. Low complexity predominate over residues 178–225 (SPSNTNSSSSSNTGSQSGTLSTSLSNTTNTNTNMGPNGTVQNQNQQGG). RRM domains follow at residues 231–304 (TNLY…MAKQ) and 310–389 (TNLY…FADG). Residues 553–579 (MTDSEQASTAASPDEAYTQYPHQAAPK) are disordered.

Has a role in the perception of gravity. The chain is Protein alan shepard from Drosophila sechellia (Fruit fly).